A 377-amino-acid chain; its full sequence is Nitric oxide reductase FlRd-NAD(+) reductase (377 aa).

The protein belongs to the FAD-dependent oxidoreductase family. The cofactor is FAD.

Its subcellular location is the cytoplasm. It carries out the reaction 2 reduced [nitric oxide reductase rubredoxin domain] + NAD(+) + H(+) = 2 oxidized [nitric oxide reductase rubredoxin domain] + NADH. The protein operates within nitrogen metabolism; nitric oxide reduction. Functionally, one of at least two accessory proteins for anaerobic nitric oxide (NO) reductase. Reduces the rubredoxin moiety of NO reductase. This Escherichia coli O6:H1 (strain CFT073 / ATCC 700928 / UPEC) protein is Nitric oxide reductase FlRd-NAD(+) reductase.